We begin with the raw amino-acid sequence, 95 residues long: Co-chaperonin GroES (95 aa).

Belongs to the GroES chaperonin family. As to quaternary structure, heptamer of 7 subunits arranged in a ring. Interacts with the chaperonin GroEL.

The protein resides in the cytoplasm. Functionally, together with the chaperonin GroEL, plays an essential role in assisting protein folding. The GroEL-GroES system forms a nano-cage that allows encapsulation of the non-native substrate proteins and provides a physical environment optimized to promote and accelerate protein folding. GroES binds to the apical surface of the GroEL ring, thereby capping the opening of the GroEL channel. The chain is Co-chaperonin GroES from Geobacter metallireducens (strain ATCC 53774 / DSM 7210 / GS-15).